The primary structure comprises 312 residues: Olfactory receptor 1D2 (312 aa).

The Extracellular portion of the chain corresponds to 1–25; the sequence is MDGGNQSEGSEFLLLGMSESPEQQQ. Residue asparagine 5 is glycosylated (N-linked (GlcNAc...) asparagine). The chain crosses the membrane as a helical span at residues 26–49; the sequence is ILFWMFLSMYLVTVVGNVLIILAI. Residues 50 to 57 are Cytoplasmic-facing; sequence NSDSHLHT. The helical transmembrane segment at 58–79 threads the bilayer; that stretch reads PMYFFLANLSFTDLFFVTNTIP. Over 80–100 the chain is Extracellular; that stretch reads KMLVNLQSQNKAISYAGCLTQ. Cysteine 97 and cysteine 189 form a disulfide bridge. A helical transmembrane segment spans residues 101 to 120; that stretch reads LYFLVSLVALDNLILAVMAY. The Cytoplasmic portion of the chain corresponds to 121–139; sequence DRYVAICCPLHYTTAMSPK. A helical transmembrane segment spans residues 140–158; sequence LCILLLSLCWVLSVLYGLI. At 159–196 the chain is on the extracellular side; sequence HTILMTRVTFCGSRKIHYIFCEMYVLLRMACSNIQINH. N-linked (GlcNAc...) asparagine glycosylation occurs at asparagine 195. A helical membrane pass occupies residues 197-219; it reads TVLIATGCFIFLIPFGFVIISYV. Residues 220–236 are Cytoplasmic-facing; it reads LIIRAILRIPSVSKKYK. Residues 237-259 traverse the membrane as a helical segment; the sequence is AFSTCASHLGAVSLFYGTLCMVY. Over 260–271 the chain is Extracellular; the sequence is LKPLHTFSVKDS. Residues 272 to 291 traverse the membrane as a helical segment; that stretch reads VATVMYAVVTPMMNPFIYSL. Topologically, residues 292–312 are cytoplasmic; it reads RNKDMHGALGRLLDTHFKRLT.

The protein belongs to the G-protein coupled receptor 1 family.

Its subcellular location is the cell membrane. Its function is as follows. Odorant receptor. The protein is Olfactory receptor 1D2 (OR1D2) of Gorilla gorilla gorilla (Western lowland gorilla).